Reading from the N-terminus, the 258-residue chain is ER membrane protein complex subunit 3 (258 aa).

A run of 3 helical transmembrane segments spans residues 8-28 (PALRNWVLLPIMFVMILIGIL), 123-143 (VVPQTIIMTWINEFFSGFILL), and 173-193 (SISWYFLNLFGLKSVYALLLG).

Belongs to the EMC3 family.

The protein resides in the cytoplasm. Its subcellular location is the membrane. This chain is ER membrane protein complex subunit 3, found in Schizosaccharomyces pombe (strain 972 / ATCC 24843) (Fission yeast).